Reading from the N-terminus, the 84-residue chain is Large ribosomal subunit protein bL27 (84 aa).

This sequence belongs to the bacterial ribosomal protein bL27 family.

This Campylobacter lari (strain RM2100 / D67 / ATCC BAA-1060) protein is Large ribosomal subunit protein bL27.